Reading from the N-terminus, the 426-residue chain is Glutamate-1-semialdehyde 2,1-aminomutase (426 aa).

K265 bears the N6-(pyridoxal phosphate)lysine mark.

This sequence belongs to the class-III pyridoxal-phosphate-dependent aminotransferase family. HemL subfamily. As to quaternary structure, homodimer. Requires pyridoxal 5'-phosphate as cofactor.

It is found in the cytoplasm. The catalysed reaction is (S)-4-amino-5-oxopentanoate = 5-aminolevulinate. It functions in the pathway porphyrin-containing compound metabolism; protoporphyrin-IX biosynthesis; 5-aminolevulinate from L-glutamyl-tRNA(Glu): step 2/2. The protein is Glutamate-1-semialdehyde 2,1-aminomutase of Klebsiella pneumoniae (strain 342).